Consider the following 106-residue polypeptide: Follitropin subunit beta (106 aa).

Intrachain disulfides connect C1–C49, C15–C64, C18–C102, C26–C80, C30–C82, and C85–C92. N5 and N22 each carry an N-linked (GlcNAc...) asparagine glycan.

Belongs to the glycoprotein hormones subunit beta family. Heterodimer. The active follitropin is a heterodimer composed of an alpha chain/CGA shared with other hormones and a unique beta chain/FSHB shown here.

The protein localises to the secreted. In terms of biological role, together with the alpha chain CGA constitutes follitropin, the follicle-stimulating hormone, and provides its biological specificity to the hormone heterodimer. Binds FSHR, a G protein-coupled receptor, on target cells to activate downstream signaling pathways. Follitropin is involved in follicle development and spermatogenesis in reproductive organs. In Struthio camelus (Common ostrich), this protein is Follitropin subunit beta (FSHB).